We begin with the raw amino-acid sequence, 393 residues long: Lipoyl synthase, mitochondrial (393 aa).

Residues C115, C120, C126, C146, C150, C153, and S362 each coordinate [4Fe-4S] cluster. One can recognise a Radical SAM core domain in the interval 131 to 351 (ETGTATATIM…RILGMDMGFR (221 aa)).

The protein belongs to the radical SAM superfamily. Lipoyl synthase family. It depends on [4Fe-4S] cluster as a cofactor.

The protein resides in the mitochondrion. The catalysed reaction is [[Fe-S] cluster scaffold protein carrying a second [4Fe-4S](2+) cluster] + N(6)-octanoyl-L-lysyl-[protein] + 2 oxidized [2Fe-2S]-[ferredoxin] + 2 S-adenosyl-L-methionine + 4 H(+) = [[Fe-S] cluster scaffold protein] + N(6)-[(R)-dihydrolipoyl]-L-lysyl-[protein] + 4 Fe(3+) + 2 hydrogen sulfide + 2 5'-deoxyadenosine + 2 L-methionine + 2 reduced [2Fe-2S]-[ferredoxin]. Its pathway is protein modification; protein lipoylation via endogenous pathway; protein N(6)-(lipoyl)lysine from octanoyl-[acyl-carrier-protein]: step 2/2. Its function is as follows. Catalyzes the radical-mediated insertion of two sulfur atoms into the C-6 and C-8 positions of the octanoyl moiety bound to the lipoyl domains of lipoate-dependent enzymes, thereby converting the octanoylated domains into lipoylated derivatives. The sequence is that of Lipoyl synthase, mitochondrial from Vitis vinifera (Grape).